The sequence spans 194 residues: Imidazoleglycerol-phosphate dehydratase (194 aa).

It belongs to the imidazoleglycerol-phosphate dehydratase family.

The protein localises to the cytoplasm. The catalysed reaction is D-erythro-1-(imidazol-4-yl)glycerol 3-phosphate = 3-(imidazol-4-yl)-2-oxopropyl phosphate + H2O. The protein operates within amino-acid biosynthesis; L-histidine biosynthesis; L-histidine from 5-phospho-alpha-D-ribose 1-diphosphate: step 6/9. The chain is Imidazoleglycerol-phosphate dehydratase from Streptococcus sanguinis (strain SK36).